An 857-amino-acid polypeptide reads, in one-letter code: MKVKETNSKPKLASRGTFQRKGIKIVGKWKQVTIDPNLFADGQMDDLVCFEELTDYRLVKNPSRLFSSEETKKRKAQAVSEEEEEEEGQSSSPKKKIKLKKQRDAARAAEGAAAQNEYEVKASEPEAQGEVTACSDQKVGGAKSESLAQAAPRKKKNKGKKKLDTFQSTSPKLPKKSKKTWMAEVHDQKADVSAWRDLFVPKAVLRALSFLGFSAPTPIQALTLAPAIRDKLDILGAAETGSGKTLAFAIPMIHSVLQWHKMKAPPIPRSTGMPPREMRFGATAHLGSPCKDRTESGVLPEEARIETEAQPSDSGVQATPETSASASAQTLLVCDDDAGEGPSSLEEKPVPKQNEDGEEKFDAEQAGKLKQELCDQIAIYKVHPRRPLLGLVLTPTRELAIQVRQHIDAVAKFTGINTAILVGGMSTQKQQRMLNRHPEIVIATPGRLWELVKEKHPHLSNLRQLRCLVIDEADRMVEKGHFAELSQLLEMLNDSQYNPSRQTLVFSATLTLVHQAPARILHKKHVKKMDKTDKLDLLMQKVGMRGKPKVIDLTRNEGTVETLTETKIHCETDEKDLYLYYFLMQYPGRSLVFANSISCIKRLSGLLKVLDVMPLTLHACMHQKQRLRNLEQFARLQDCVLLATDVAARGLDIPKVQHVIHYQVPRTSEIYIHRSGRTARAASEGLSLMLIGPEDVINFKKIYKTLQKDEDIPLFPVQSKYMDVVKERIRLARQIEKAEYRNFQACLHNSWIEQAAAALEIELEEEMYKGGKADQQEERRRQKQMKMLKQELRHLLSQPLFQENLKTRYPTQSGRPPQPVLASRNIESALSCLSRQKRRRKKPKEPRAPPQPGSSTS.

The tract at residues 61-179 (NPSRLFSSEE…SPKLPKKSKK (119 aa)) is disordered. A phosphoserine mark is found at serine 80 and serine 92. A compositionally biased stretch (basic residues) spans 152–161 (PRKKKNKGKK). Serine 170 carries the phosphoserine modification. The Q motif signature appears at 193 to 221 (SAWRDLFVPKAVLRALSFLGFSAPTPIQA). The Helicase ATP-binding domain maps to 225–528 (APAIRDKLDI…RILHKKHVKK (304 aa)). Residue 238–245 (AETGSGKT) coordinates ATP. The disordered stretch occupies residues 279–363 (RFGATAHLGS…NEDGEEKFDA (85 aa)). Phosphoserine is present on residues serine 288 and serine 296. Basic and acidic residues predominate over residues 290–307 (CKDRTESGVLPEEARIET). A compositionally biased stretch (polar residues) spans 309–330 (AQPSDSGVQATPETSASASAQT). Residues 345-363 (LEEKPVPKQNEDGEEKFDA) are compositionally biased toward basic and acidic residues. Lysine 370 participates in a covalent cross-link: Glycyl lysine isopeptide (Lys-Gly) (interchain with G-Cter in SUMO2). The DEAD box signature appears at 471–474 (DEAD). Residues 576–723 (DLYLYYFLMQ…LFPVQSKYMD (148 aa)) enclose the Helicase C-terminal domain. A Glycyl lysine isopeptide (Lys-Gly) (interchain with G-Cter in SUMO2) cross-link involves residue lysine 624. Residues 808 to 857 (RYPTQSGRPPQPVLASRNIESALSCLSRQKRRRKKPKEPRAPPQPGSSTS) are disordered. The segment covering 825-834 (NIESALSCLS) has biased composition (polar residues). Positions 835–844 (RQKRRRKKPK) are enriched in basic residues. A compositionally biased stretch (pro residues) spans 848-857 (APPQPGSSTS).

This sequence belongs to the DEAD box helicase family. DDX24/MAK5 subfamily. As to quaternary structure, interacts with FADD. Interacts with RIPK1; this interaction disrupts RLR signaling activation of IFN-dependent transcription factor IRF7. Interacts with NIP7. Interacts with EP300; this interaction prevents TP53 acetylation mediated by EP300. Post-translationally, ubiquitinated by MDM2 without targeting DDX24 for proteasomal degradation. Instead, polyubiquitylated DDX24 promotes interaction with NIP7, a component of pre-rRNP processing complex, and associates with pre-rRNA molecules and pre-ribosomal particles.

The protein localises to the cytoplasm. The protein resides in the nucleus. It carries out the reaction ATP + H2O = ADP + phosphate + H(+). In terms of biological role, ATP-dependent RNA helicase that plays a role in various aspects of RNA metabolism including pre-mRNA splicing and is thereby involved in different biological processes such as cell cycle regulation or innate immunity. Plays an inhibitory role in TP53 transcriptional activity and subsequently in TP53 controlled cell growth arrest and senescence by inhibiting its EP300 mediated acetylation. Negatively regulates cytosolic RNA-mediated innate immune signaling at least in part by affecting RIPK1/IRF7 interactions. Alternatively, possesses antiviral activity by recognizing gammaherpesvirus transcripts in the context of lytic reactivation. Plays an essential role in cell cycle regulation in vascular smooth muscle cells by interacting with and regulating FANCA (Fanconi anemia complementation group A) mRNA. This chain is ATP-dependent RNA helicase DDX24 (Ddx24), found in Mus musculus (Mouse).